A 208-amino-acid chain; its full sequence is Ciliary-associated calcium-binding coiled-coil protein 1 (208 aa).

As to expression, testis-specific. Expressed in spermatocytes and round spermatids (at protein level).

It localises to the cytoplasm. Its subcellular location is the cytoskeleton. The protein localises to the microtubule organizing center. It is found in the centrosome. The protein resides in the cell projection. It localises to the cilium. Its subcellular location is the flagellum. Functionally, calcium-binding protein. May be involved in the control of sperm flagellar movement. The polypeptide is Ciliary-associated calcium-binding coiled-coil protein 1 (Mus musculus (Mouse)).